Reading from the N-terminus, the 217-residue chain is Peroxiredoxin (217 aa).

The region spanning 2–159 (AVIGEKFPDV…VVRLVKALQT (158 aa)) is the Thioredoxin domain. Residue cysteine 46 is the Cysteine sulfenic acid (-SOH) intermediate of the active site. Arginine 122 contacts substrate.

This sequence belongs to the peroxiredoxin family. Prx6 subfamily. In terms of assembly, homodecamer. Pentamer of dimers that assemble into a ring structure.

Its subcellular location is the cytoplasm. It catalyses the reaction a hydroperoxide + [thioredoxin]-dithiol = an alcohol + [thioredoxin]-disulfide + H2O. Its function is as follows. Thiol-specific peroxidase that catalyzes the reduction of hydrogen peroxide and organic hydroperoxides to water and alcohols, respectively. Plays a role in cell protection against oxidative stress by detoxifying peroxides. In Methanococcus vannielii (strain ATCC 35089 / DSM 1224 / JCM 13029 / OCM 148 / SB), this protein is Peroxiredoxin.